The following is a 393-amino-acid chain: S-adenosylmethionine synthase (393 aa).

H16 contacts ATP. D18 is a binding site for Mg(2+). E44 contacts K(+). Positions 57 and 100 each coordinate L-methionine. The flexible loop stretch occupies residues 100–110 (QSNDIAQGVDH). ATP is bound by residues 167 to 169 (DAK), 238 to 239 (RF), D247, 253 to 254 (RK), A270, and K274. D247 contacts L-methionine. K278 contacts L-methionine.

Belongs to the AdoMet synthase family. Homotetramer; dimer of dimers. The cofactor is Mg(2+). It depends on K(+) as a cofactor.

The protein localises to the cytoplasm. The enzyme catalyses L-methionine + ATP + H2O = S-adenosyl-L-methionine + phosphate + diphosphate. It functions in the pathway amino-acid biosynthesis; S-adenosyl-L-methionine biosynthesis; S-adenosyl-L-methionine from L-methionine: step 1/1. Its function is as follows. Catalyzes the formation of S-adenosylmethionine (AdoMet) from methionine and ATP. The overall synthetic reaction is composed of two sequential steps, AdoMet formation and the subsequent tripolyphosphate hydrolysis which occurs prior to release of AdoMet from the enzyme. In Polaromonas sp. (strain JS666 / ATCC BAA-500), this protein is S-adenosylmethionine synthase.